Here is a 338-residue protein sequence, read N- to C-terminus: MIRVAINGYGRIGRSILRAVYESAKRDRIQIVAINELAKPEAMLHLTQYDTTHGRFHTQVKLDEQHMIIGDDAIKLLHEPNPANLPWQEMDIDIVFEATGVINDRQACEAHIEAGARQVLISHPSSSDVDATIVYGVNQDLLKAEHTIVSNASCTTNCIVPVIDVLDRHFQVKSGAITTIHSAMNDQQVIDAYHDDLRRTRAAGQSIIPVDTKLARGIERILPHMKDKFEAISVRVPTINVTAIDLSVTLDKRVDIEQVNRVLKQATEGSFSGVVGYTNEPLVSCDFNHDPRSSIVDGTQTRVSDGHLVKLLLWCDNEWGFANRMLDTSLEMIKARRA.

11-12 (RI) contributes to the NAD(+) binding site. Substrate is bound by residues 153–155 (SCT), arginine 199, 212–213 (TK), and arginine 235. Residue cysteine 154 is the Nucleophile of the active site. Asparagine 317 lines the NAD(+) pocket.

The protein belongs to the glyceraldehyde-3-phosphate dehydrogenase family. Epd subfamily. As to quaternary structure, homotetramer.

It localises to the cytoplasm. The catalysed reaction is D-erythrose 4-phosphate + NAD(+) + H2O = 4-phospho-D-erythronate + NADH + 2 H(+). It functions in the pathway cofactor biosynthesis; pyridoxine 5'-phosphate biosynthesis; pyridoxine 5'-phosphate from D-erythrose 4-phosphate: step 1/5. Catalyzes the NAD-dependent conversion of D-erythrose 4-phosphate to 4-phosphoerythronate. In Shewanella piezotolerans (strain WP3 / JCM 13877), this protein is D-erythrose-4-phosphate dehydrogenase.